A 1178-amino-acid chain; its full sequence is DNA-directed RNA polymerase subunit beta (1178 aa).

The segment at 1–37 is disordered; sequence MLEGCILPDFGQSKTDVSPSQSRPQSSPNNSVPGAPN. Residues 17-33 are compositionally biased toward low complexity; the sequence is VSPSQSRPQSSPNNSVP.

This sequence belongs to the RNA polymerase beta chain family. The RNAP catalytic core consists of 2 alpha, 1 beta, 1 beta' and 1 omega subunit. When a sigma factor is associated with the core the holoenzyme is formed, which can initiate transcription.

It carries out the reaction RNA(n) + a ribonucleoside 5'-triphosphate = RNA(n+1) + diphosphate. In terms of biological role, DNA-dependent RNA polymerase catalyzes the transcription of DNA into RNA using the four ribonucleoside triphosphates as substrates. The polypeptide is DNA-directed RNA polymerase subunit beta (Mycobacterium leprae (strain Br4923)).